The primary structure comprises 448 residues: Tubulin alpha chain (448 aa).

GTP is bound by residues Gln12, Glu73, Ser142, Gly146, Thr147, Thr181, Asn208, and Asn230. Glu73 serves as a coordination point for Mg(2+). Residue Glu256 is part of the active site.

Belongs to the tubulin family. In terms of assembly, dimer of alpha and beta chains. A typical microtubule is a hollow water-filled tube with an outer diameter of 25 nm and an inner diameter of 15 nM. Alpha-beta heterodimers associate head-to-tail to form protofilaments running lengthwise along the microtubule wall with the beta-tubulin subunit facing the microtubule plus end conferring a structural polarity. Microtubules usually have 13 protofilaments but different protofilament numbers can be found in some organisms and specialized cells. Requires Mg(2+) as cofactor.

It is found in the cytoplasm. The protein localises to the cytoskeleton. The enzyme catalyses GTP + H2O = GDP + phosphate + H(+). In terms of biological role, tubulin is the major constituent of microtubules, a cylinder consisting of laterally associated linear protofilaments composed of alpha- and beta-tubulin heterodimers. Microtubules grow by the addition of GTP-tubulin dimers to the microtubule end, where a stabilizing cap forms. Below the cap, tubulin dimers are in GDP-bound state, owing to GTPase activity of alpha-tubulin. The sequence is that of Tubulin alpha chain (TUB1) from Eremothecium gossypii (strain ATCC 10895 / CBS 109.51 / FGSC 9923 / NRRL Y-1056) (Yeast).